Here is a 485-residue protein sequence, read N- to C-terminus: Malonate-semialdehyde dehydrogenase (485 aa).

Positions 155, 179, 182, 183, and 232 each coordinate NAD(+). The active-site Nucleophile is C287. E386 contributes to the NAD(+) binding site.

The protein belongs to the aldehyde dehydrogenase family. IolA subfamily. In terms of assembly, homotetramer.

The catalysed reaction is 3-oxopropanoate + NAD(+) + CoA + H2O = hydrogencarbonate + acetyl-CoA + NADH + H(+). It catalyses the reaction 2-methyl-3-oxopropanoate + NAD(+) + CoA + H2O = propanoyl-CoA + hydrogencarbonate + NADH + H(+). It functions in the pathway polyol metabolism; myo-inositol degradation into acetyl-CoA; acetyl-CoA from myo-inositol: step 7/7. In terms of biological role, catalyzes the oxidation of malonate semialdehyde (MSA) and methylmalonate semialdehyde (MMSA) into acetyl-CoA and propanoyl-CoA, respectively. Is involved in a myo-inositol catabolic pathway. Bicarbonate, and not CO2, is the end-product of the enzymatic reaction. This chain is Malonate-semialdehyde dehydrogenase, found in Halalkalibacterium halodurans (strain ATCC BAA-125 / DSM 18197 / FERM 7344 / JCM 9153 / C-125) (Bacillus halodurans).